A 218-amino-acid chain; its full sequence is Adenylate kinase (218 aa).

Position 10 to 15 (10 to 15 (GAGKGT)) interacts with ATP. The segment at 30–59 (STGDMLRAAVKAGTPLGLEAKKVMDAGGLV) is NMP. AMP-binding positions include Thr-31, Arg-36, 57 to 59 (GLV), 85 to 88 (GFPR), and Gln-92. Positions 122-159 (GRRVHVASGRTYHVKFNPPKVAGKDDETGEDLIQRADD) are LID. Residues Arg-123 and 132–133 (TY) contribute to the ATP site. AMP contacts are provided by Arg-156 and Arg-167. Residue Gly-203 participates in ATP binding.

This sequence belongs to the adenylate kinase family. As to quaternary structure, monomer.

It is found in the cytoplasm. It carries out the reaction AMP + ATP = 2 ADP. The protein operates within purine metabolism; AMP biosynthesis via salvage pathway; AMP from ADP: step 1/1. Catalyzes the reversible transfer of the terminal phosphate group between ATP and AMP. Plays an important role in cellular energy homeostasis and in adenine nucleotide metabolism. The chain is Adenylate kinase from Laribacter hongkongensis (strain HLHK9).